The following is a 61-amino-acid chain: Disintegrin atroxatin (61 aa).

Positions 1 to 61 (NPCCDAATCK…ADCPRKGIYG (61 aa)) constitute a Disintegrin domain. 5 cysteine pairs are disulfide-bonded: Cys-3/Cys-26, Cys-9/Cys-23, Cys-17/Cys-23, Cys-22/Cys-47, and Cys-35/Cys-54. The short motif at 39 to 41 (RGD) is the Cell attachment site element.

This sequence belongs to the venom metalloproteinase (M12B) family. P-II subfamily. P-IIa sub-subfamily. In terms of assembly, monomer (disintegrin). Expressed by the venom gland.

It localises to the secreted. Inhibits fibrinogen interaction with platelets. Acts by binding to alpha-IIb/beta-3 (ITGA2B/ITGB3) on the platelet surface and inhibits aggregation induced by ADP, thrombin, platelet-activating factor and collagen. This Crotalus atrox (Western diamondback rattlesnake) protein is Disintegrin atroxatin.